The following is a 562-amino-acid chain: Calcium-dependent protein kinase 5 (562 aa).

Residues 118–372 (ELDKYKLGKG…VHKIVNHKWF (255 aa)) form the Protein kinase domain. ATP-binding positions include 124–132 (LGKGSYGNV) and lysine 147. Catalysis depends on aspartate 238, which acts as the Proton acceptor. A J domain autoinhibitory motif motif is present at residues 394–402 (KFKKFHKLC). The tract at residues 394–429 (KFKKFHKLCKIKKLAITCIAYQLNKKKFGKMKKTFE) is j domain. The J domain EF-hand interaction motif signature appears at 403–412 (KIKKLAITCI). EF-hand domains lie at 419–453 (KKFG…VGDN), 454–489 (EIDR…HSIL), 490–525 (EQDA…SNDQ), and 528–562 (FSKE…GRQS). Ca(2+) contacts are provided by aspartate 432, asparagine 434, aspartate 436, glutamate 443, aspartate 467, aspartate 469, asparagine 471, glutamate 478, aspartate 503, asparagine 505, aspartate 507, glutamate 514, aspartate 541, asparagine 543, aspartate 545, tyrosine 547, and glutamate 552.

The protein belongs to the protein kinase superfamily. Ser/Thr protein kinase family. CDPK subfamily. Mg(2+) is required as a cofactor. May be palmitoylated. In terms of processing, autophosphorylated in vitro.

Its subcellular location is the cytoplasm. The protein localises to the cytoplasmic vesicle. The protein resides in the secretory vesicle. It is found in the microneme membrane. It localises to the cell membrane. The enzyme catalyses L-seryl-[protein] + ATP = O-phospho-L-seryl-[protein] + ADP + H(+). The catalysed reaction is L-threonyl-[protein] + ATP = O-phospho-L-threonyl-[protein] + ADP + H(+). With respect to regulation, activated by calcium. Upon calcium binding to the EF-hand domains, the C-terminus of the junction domain (J domain) undergoes a conformational change which results in the dissociation of the pseudo-substrate inhibitory motif from the catalytic domain. This, in turn, may facilitate the autophosphorylation of the activation loop at Thr-278, which leads to the kinase activation. Its function is as follows. Calcium-dependent protein kinase which acts as a sensor and effector of intracellular Ca(2+) levels probably in part downstream of cGMP-activated PKG kinase. Plays a central role in host erythrocytes and hepatocytes infection cycles. During the liver stage, involved in sporozoite motility and thus in sporozoite invasion of host hepatocytes, probably together with CDPK1 and CDPK4. Involved in merosome egress from host hepatocytes, probably together with CDPK4. Required for the release of hepatic merozoites from merosomes in the host blood stream. During the asexual blood stage, required for merozoite egress from host erythrocytes by triggering microneme secretion. Phosphorylates transporter NPT1 at late schizont stage. This chain is Calcium-dependent protein kinase 5, found in Plasmodium berghei (strain Anka).